Consider the following 481-residue polypeptide: ATP synthase subunit beta, chloroplastic (481 aa).

162–169 (GGAGVGKT) provides a ligand contact to ATP.

It belongs to the ATPase alpha/beta chains family. F-type ATPases have 2 components, CF(1) - the catalytic core - and CF(0) - the membrane proton channel. CF(1) has five subunits: alpha(3), beta(3), gamma(1), delta(1), epsilon(1). CF(0) has four main subunits: a(1), b(1), b'(1) and c(9-12).

It is found in the plastid. The protein resides in the chloroplast thylakoid membrane. It carries out the reaction ATP + H2O + 4 H(+)(in) = ADP + phosphate + 5 H(+)(out). Functionally, produces ATP from ADP in the presence of a proton gradient across the membrane. The catalytic sites are hosted primarily by the beta subunits. The sequence is that of ATP synthase subunit beta, chloroplastic from Oltmannsiellopsis viridis (Marine flagellate).